The sequence spans 381 residues: Complement decay-accelerating factor (381 aa).

The signal sequence occupies residues 1–34; sequence MTVARPSVPAALPLLGELPRLLLLVLLCLPAVWG. 4 Sushi domains span residues 35–96, 96–160, 161–222, and 223–285; these read DCGL…FCNR, RSCE…FCKK, KSCP…ECRE, and IYCP…ECRG. Intrachain disulfides connect Cys36/Cys81 and Cys65/Cys94. Asn95 carries an N-linked (GlcNAc...) asparagine glycan. 6 disulfides stabilise this stretch: Cys98-Cys145, Cys129-Cys158, Cys163-Cys204, Cys190-Cys220, Cys225-Cys267, and Cys253-Cys283. The interval 277 to 354 is disordered; sequence SGPPPECRGK…PNKGSGTTSG (78 aa). Residues 287-309 are compositionally biased toward polar residues; it reads SLTSKVPPTVQKPTTVNVPTTEV. A compositionally biased stretch (low complexity) spans 310-328; it reads SPTSQKTTTKTTTPNAQAT. Residue Ser353 is the site of GPI-anchor amidated serine attachment. A propeptide spans 354–381 (removed in mature form); it reads GTTRLLSGHTCFTLTGLLGTLVTMGLLT.

This sequence belongs to the receptors of complement activation (RCA) family. Monomer (major form) and non-disulfide-linked, covalent homodimer (minor form). Interacts with ADGRE5. In terms of assembly, (Microbial infection) Interacts with coxsackievirus A21, coxsackieviruses B1, B3 and B5 capsid proteins. As to quaternary structure, (Microbial infection) Interacts with human enterovirus 70 and D68 capsid proteins. (Microbial infection) Interacts with human echoviruses 6, 7, 11, 12, 20 and 21 capsid proteins. In terms of processing, the Ser/Thr-rich domain is heavily O-glycosylated. As to expression, expressed on the plasma membranes of all cell types that are in intimate contact with plasma complement proteins. It is also found on the surfaces of epithelial cells lining extracellular compartments, and variants of the molecule are present in body fluids and in extracellular matrix.

Its subcellular location is the cell membrane. It is found in the secreted. This protein recognizes C4b and C3b fragments that condense with cell-surface hydroxyl or amino groups when nascent C4b and C3b are locally generated during C4 and c3 activation. Interaction of daf with cell-associated C4b and C3b polypeptides interferes with their ability to catalyze the conversion of C2 and factor B to enzymatically active C2a and Bb and thereby prevents the formation of C4b2a and C3bBb, the amplification convertases of the complement cascade. Inhibits complement activation by destabilizing and preventing the formation of C3 and C5 convertases, which prevents complement damage. Its function is as follows. (Microbial infection) Acts as a receptor for Coxsackievirus A21, coxsackieviruses B1, B3 and B5. Functionally, (Microbial infection) Acts as a receptor for Human enterovirus 70 and D68. In terms of biological role, (Microbial infection) Acts as a receptor for Human echoviruses 6, 7, 11, 12, 20 and 21. The sequence is that of Complement decay-accelerating factor (CD55) from Homo sapiens (Human).